Reading from the N-terminus, the 88-residue chain is Small ribosomal subunit protein bS20 (88 aa).

A disordered region spans residues Met-1–Met-27.

Belongs to the bacterial ribosomal protein bS20 family.

Its function is as follows. Binds directly to 16S ribosomal RNA. In Shewanella baltica (strain OS223), this protein is Small ribosomal subunit protein bS20.